Here is a 105-residue protein sequence, read N- to C-terminus: Putative toxin MazF8 (105 aa).

In terms of assembly, forms a complex with cognate antitoxin MazE8.

Putative toxic component of a type II toxin-antitoxin (TA) system. Acts as an endoribonuclease. Neutralized by coexpression with cognate antitoxin MazE8. The protein is Putative toxin MazF8 (mazF8) of Mycobacterium tuberculosis (strain CDC 1551 / Oshkosh).